The sequence spans 490 residues: Cardiolipin synthase A (490 aa).

Transmembrane regions (helical) follow at residues 20 to 40 (LGLL…HAVL) and 49 to 69 (IAWA…YLVF). 2 PLD phosphodiesterase domains span residues 229–256 (VNFR…GVEY) and 403–430 (QPGF…DNRS). Residues His234, Lys236, Asp241, His408, Lys410, and Asp415 contribute to the active site.

The protein belongs to the phospholipase D family. Cardiolipin synthase subfamily. ClsA sub-subfamily.

It localises to the cell inner membrane. The enzyme catalyses 2 a 1,2-diacyl-sn-glycero-3-phospho-(1'-sn-glycerol) = a cardiolipin + glycerol. Functionally, catalyzes the reversible phosphatidyl group transfer from one phosphatidylglycerol molecule to another to form cardiolipin (CL) (diphosphatidylglycerol) and glycerol. The polypeptide is Cardiolipin synthase A (Pseudomonas aeruginosa (strain LESB58)).